The primary structure comprises 500 residues: Glutamate decarboxylase (500 aa).

An N6-(pyridoxal phosphate)lysine modification is found at lysine 277. Residues valine 469 to cysteine 500 form a calmodulin-binding region.

This sequence belongs to the group II decarboxylase family. In terms of assembly, homodimer. The cofactor is pyridoxal 5'-phosphate.

The catalysed reaction is L-glutamate + H(+) = 4-aminobutanoate + CO2. Functionally, catalyzes the production of GABA. The calmodulin-binding is calcium-dependent and it is proposed that this may, directly or indirectly, form a calcium regulated control of GABA biosynthesis. This chain is Glutamate decarboxylase (GAD), found in Petunia hybrida (Petunia).